Reading from the N-terminus, the 481-residue chain is Protein FAM83E (481 aa).

The DUF1669 stretch occupies residues 1–296; the sequence is MAASQLAALE…LYAASRPLSA (296 aa). The interval 351–481 is disordered; sequence KQETPTTTGP…ASGSGSGRRR (131 aa). Positions 371-385 are enriched in low complexity; that stretch reads RTRTTSGPPTRPSRS. Polar residues-rich tracts occupy residues 391–400 and 465–474; these read RLSQLSGSSD and NATTSDWASG.

The protein belongs to the FAM83 family. In terms of assembly, directly interacts (via DUF1669) with CSNK1A1, CSNK1A1L, CSNK1D and CSNK1E. May interact with RAF1.

It is found in the cytoplasm. The protein localises to the perinuclear region. In terms of biological role, may play a role in MAPK signaling. This Mus musculus (Mouse) protein is Protein FAM83E.